An 833-amino-acid polypeptide reads, in one-letter code: Multiphosphoryl transfer protein 2 (833 aa).

Positions 2–91 (ALIVEFICEL…QWLRDEFPHC (90 aa)) constitute an HPr domain. His16 acts as the Tele-phosphohistidine intermediate; for HPr activity in catalysis. Position 16 is a phosphohistidine; by EI (His16). Positions 143–653 (LGNLPAAKGV…AAKARMAQLD (511 aa)) are PTS EI. The Tele-phosphohistidine intermediate; for PTS EI activity role is filled by His301. His301 carries the phosphohistidine; by autocatalysis modification. The phosphoenolpyruvate site is built by Arg408 and Arg444. 2 residues coordinate Mg(2+): Glu543 and Asp567. Phosphoenolpyruvate contacts are provided by residues 566–567 (ND) and Arg577. Cys614 functions as the Proton donor; for EI activity in the catalytic mechanism. One can recognise a PTS EIIA type-2 domain in the interval 688 to 830 (PLVTAECITL…DAIASLLQHE (143 aa)). The Tele-phosphohistidine intermediate; for PTS EIIA activity role is filled by His750. His750 carries the post-translational modification Phosphohistidine; by HPr.

Belongs to the PEP-utilizing enzyme family. Mg(2+) is required as a cofactor.

It is found in the cytoplasm. The enzyme catalyses L-histidyl-[protein] + phosphoenolpyruvate = N(pros)-phospho-L-histidyl-[protein] + pyruvate. It catalyses the reaction D-fructose(out) + N(pros)-phospho-L-histidyl-[protein] = D-fructose 1-phosphate(in) + L-histidyl-[protein]. Multifunctional protein that includes general (non sugar-specific) and sugar-specific components of the phosphoenolpyruvate-dependent sugar phosphotransferase system (sugar PTS). This major carbohydrate active transport system catalyzes the phosphorylation of incoming sugar substrates concomitantly with their translocation across the cell membrane. The enzyme II FrwABC PTS system is involved in fructose transport. This chain is Multiphosphoryl transfer protein 2, found in Escherichia coli (strain K12).